Reading from the N-terminus, the 53-residue chain is Large ribosomal subunit protein bL32c (53 aa).

This sequence belongs to the bacterial ribosomal protein bL32 family.

The protein localises to the plastid. It is found in the chloroplast. This is Large ribosomal subunit protein bL32c from Glycine max (Soybean).